The following is a 495-amino-acid chain: MADRNLRDLLAPWVAGLPARELREMTLDSRVAAAGDLFVAVVGHQADGRRYIPQAIAQGVAAIIVEAKDEATDGEIREMHGVPVVYLSQLNERLSALAGRFYHEPSENMRLVAVTGTNGKTTTTQLLAQWSQLLGETSAVMGTVGNGLLGKVIPTENTTGSAVDVQHVLASLVAQGATFGAMEVSSHGLVQHRVAALKFAASVFTNLSRDHLDYHGDMAHYEAAKWMLYSTHHHGQAIVNADDEVGRRWLASLPDAVAVSMEGHINPNCHGRWLKAEAVEYHDRGATIRFASSWGEGEIESRLMGAFNVSNLLLALATLLALGYPLTDLLKTAARLQPVCGRMEVFTAPGKPTVVVDYAHTPDALEKALQAARLHCAGKLWCVFGCGGDRDKGKRPLMGAIAEEFADIVVVTDDNPRTEEPRAIINDILAGMLDAGQVRVMEGRAEAVTNAIMQAKDNDVVLIAGKGHEDYQIVGTQRLDYSDRVTAARLLGVIA.

UDP-N-acetyl-alpha-D-muramoyl-L-alanyl-D-glutamate-binding positions include Leu27, Ser29, and His44–Ala46. Position 116-122 (Gly116–Thr122) interacts with ATP. UDP-N-acetyl-alpha-D-muramoyl-L-alanyl-D-glutamate is bound by residues Asn157, Thr158–Thr159, Ser185, Gln191, and Arg193. Lys225 is subject to N6-carboxylysine. Meso-2,6-diaminopimelate contacts are provided by residues Arg390, Asp414 to Arg417, Gly465, and Glu469. The short motif at Asp414–Arg417 is the Meso-diaminopimelate recognition motif element.

Belongs to the MurCDEF family. MurE subfamily. Requires Mg(2+) as cofactor. Post-translationally, carboxylation is probably crucial for Mg(2+) binding and, consequently, for the gamma-phosphate positioning of ATP.

It localises to the cytoplasm. The catalysed reaction is UDP-N-acetyl-alpha-D-muramoyl-L-alanyl-D-glutamate + meso-2,6-diaminopimelate + ATP = UDP-N-acetyl-alpha-D-muramoyl-L-alanyl-gamma-D-glutamyl-meso-2,6-diaminopimelate + ADP + phosphate + H(+). It participates in cell wall biogenesis; peptidoglycan biosynthesis. Its function is as follows. Catalyzes the addition of meso-diaminopimelic acid to the nucleotide precursor UDP-N-acetylmuramoyl-L-alanyl-D-glutamate (UMAG) in the biosynthesis of bacterial cell-wall peptidoglycan. In Salmonella paratyphi A (strain ATCC 9150 / SARB42), this protein is UDP-N-acetylmuramoyl-L-alanyl-D-glutamate--2,6-diaminopimelate ligase.